We begin with the raw amino-acid sequence, 374 residues long: Translocating chain-associated membrane protein 1 (374 aa).

Over 1-29 the chain is Cytoplasmic; sequence MAIRKKSTKSPPVLSHEFVLQNHADIVSC. A helical transmembrane segment spans residues 30-50; that stretch reads VAMVFLLGLMFEITAKASIIF. Over 51 to 76 the chain is Lumenal; that stretch reads VTLQYNVTLPATEEQATESASLYYYG. A glycan (N-linked (GlcNAc...) asparagine) is linked at asparagine 56. The chain crosses the membrane as a helical span at residues 77–97; that stretch reads IKDLATVFFYMLVAIIIHAVI. Topologically, residues 98–121 are cytoplasmic; the sequence is QEYMLDKINRRMHFSKTKHSKFNE. The region spanning 117-326 is the TLC domain; the sequence is SKFNESGQLS…NFQLRRWREH (210 aa). Residues 122–142 traverse the membrane as a helical segment; sequence SGQLSAFYLFACVWGTFILIS. Residues 143–159 lie on the Lumenal side of the membrane; sequence ENYISDPTILWRAYPHN. A helical membrane pass occupies residues 160–180; sequence LMTFQMKFFYISQLAYWLHAF. Residues 181 to 192 lie on the Cytoplasmic side of the membrane; the sequence is PELYFQKTKRED. A helical transmembrane segment spans residues 193–213; the sequence is IPRQLVYIGLYLFHIAGAYLL. Position 214 (asparagine 214) is a topological domain, lumenal. A helical transmembrane segment spans residues 215-235; it reads LNHLGLVLLVLHYFVEFLFHI. Over 236–251 the chain is Cytoplasmic; it reads SRLFYFSNEKYQKGFS. Residues 252 to 272 traverse the membrane as a helical segment; sequence LWAVLFVLGRLLTLILSVLTV. The Lumenal segment spans residues 273-297; the sequence is GFGLARAENQKLDFSTGNFNVLAVR. The chain crosses the membrane as a helical span at residues 298–318; it reads IAVLASICITQAFMVWKFINF. At 319-374 the chain is on the cytoplasmic side; it reads QLRRWREHSAFQAPAVKKKPTVTKGRSSKKGTENGVNGTLTSNVADSPRNKKEKSS. Residues 334-347 show a composition bias toward basic residues; the sequence is VKKKPTVTKGRSSK. The interval 334-374 is disordered; sequence VKKKPTVTKGRSSKKGTENGVNGTLTSNVADSPRNKKEKSS. Over residues 352-363 the composition is skewed to polar residues; it reads NGVNGTLTSNVA. Serine 365 bears the Phosphoserine mark.

It belongs to the TRAM family. As to quaternary structure, interacts with SEC61B. May interact with Derlin-1/DERL1. Post-translationally, N-glycosylated.

The protein resides in the endoplasmic reticulum membrane. In terms of biological role, involved in the translocation of nascent protein chains into or through the endoplasmic reticulum (ER) membrane by facilitating the proper chain positioning at the SEC61 channel. Regulates the exposure of nascent secretory protein chain to the cytosol during translocation into the ER. May affect the phospholipid bilayer in the vicinity of the lateral gate of the SEC61 channel, thereby facilitating ER protein transport. Intimately associates with transmembrane (TM) domain of nascent membrane proteins during the entire integration process into the ER membrane. Associates with the second TM domain of G-protein-coupled receptor opsin/OPSD nascent chain in the ER membrane, which may facilitate its integration into the membrane. Under conditions of ER stress, participates in the disposal of misfolded ER membrane proteins during the unfolded protein response (UPR), an integrated stress response (ISR) pathway, by selectively retrotranslocating misfolded ER-membrane proteins from the ER into the cytosol where they are ubiquitinated and degraded by the proteasome. In Pongo abelii (Sumatran orangutan), this protein is Translocating chain-associated membrane protein 1 (TRAM1).